A 116-amino-acid polypeptide reads, in one-letter code: Putative serine proteinase inhibitor 2 homolog first part (116 aa).

This sequence belongs to the serpin family. Poxviruses subfamily.

The protein is Putative serine proteinase inhibitor 2 homolog first part of Vaccinia virus (strain Copenhagen) (VACV).